We begin with the raw amino-acid sequence, 353 residues long: Uroporphyrinogen decarboxylase (353 aa).

Residues 30–34 (RQAGR), Asp-79, Tyr-154, Ser-209, and His-332 each bind substrate.

The protein belongs to the uroporphyrinogen decarboxylase family. As to quaternary structure, homodimer.

It localises to the cytoplasm. It carries out the reaction uroporphyrinogen III + 4 H(+) = coproporphyrinogen III + 4 CO2. Its pathway is porphyrin-containing compound metabolism; protoporphyrin-IX biosynthesis; coproporphyrinogen-III from 5-aminolevulinate: step 4/4. In terms of biological role, catalyzes the decarboxylation of four acetate groups of uroporphyrinogen-III to yield coproporphyrinogen-III. This Mycobacterium ulcerans (strain Agy99) protein is Uroporphyrinogen decarboxylase.